The primary structure comprises 776 residues: Ecdysone receptor (776 aa).

A modulating region spans residues 1-290 (MYRLNIVSTN…GPTPRQQEEL (290 aa)). Residues 199 to 283 (NEEWISSPSP…DAKKQKKGPT (85 aa)) are disordered. Low complexity predominate over residues 204–213 (SSPSPGSVPG). 2 stretches are compositionally biased toward polar residues: residues 227 to 245 (TTYT…STGS) and 261 to 270 (SPSSSLNGYT). Residues 288 to 363 (EELCLVCGDR…VGMRPECVVP (76 aa)) constitute a DNA-binding region (nuclear receptor). 2 consecutive NR C4-type zinc fingers follow at residues 291-311 (CLVC…CEGC) and 327-346 (CKFG…CQEC). Positions 437–673 (NQMAVIYKLI…FLEEIWDVQD (237 aa)) constitute an NR LBD domain. Polar residues predominate over residues 679–688 (QAQMHSHGTQ). A disordered region spans residues 679-776 (QAQMHSHGTQ…VPGLGMLDQV (98 aa)). The span at 689-745 (SSSSSSSSSSSSSNGSSNGNSSSNSNSSQHGPHPHPHGQQLTPNQQQHQQQHSQLQQ) shows a compositional bias: low complexity.

It belongs to the nuclear hormone receptor family. NR1 subfamily. In terms of assembly, heterodimer of USP and ECR. Only the heterodimer is capable of high-affinity binding to ecdysone. In terms of tissue distribution, a peak level expression is seen in the fat body of previtellogenic female mosquitos at one and two days after eclosion, levels fall three-fold at three days posteclosion.

The protein localises to the nucleus. Receptor for ecdysone. Binds to ecdysone response elements (ECRES). This is Ecdysone receptor (EcR) from Aedes aegypti (Yellowfever mosquito).